A 382-amino-acid chain; its full sequence is MANRMILNETAWFGRGAVGALTDEVKRRGYQKALIVTDKTLVQCGVVAKVTDKMDAAGLAWAIYDGVVPNPTITVVKEGLGVFQNSGADYLIAIGGGSPQDTCKAIGIISNNPEFADVRSLEGLSPTNKPSVPILAIPTTAGTAAEVTINYVITDEEKRRKFVCVDPHDIPQVAFIDADMMDGMPPALKAATGVDALTHAIEGYITRGAWALTDALHIKAIEIIAGALRGSVAGDKDAGEEMALGQYVAGMGFSNVGLGLVHGMAHPLGAFYNTPHGVANAILLPHVMRYNADFTGEKYRDIARVMGVKVEGMSLEEARNAAVEAVFALNRDVGIPPHLRDVGVRKEDIPALAQAALDDVCTGGNPREATLEDIVELYHTAW.

Residues Asp38, Asn70, 97–98 (GS), 139–143 (TTAGT), Asn150, Lys161, and 180–184 (MMDGM) contribute to the NAD(+) site. Fe cation contacts are provided by Asp195, His199, His262, and His276.

This sequence belongs to the iron-containing alcohol dehydrogenase family. In terms of assembly, homodimer. The cofactor is Fe cation.

It catalyses the reaction (R)-propane-1,2-diol + NAD(+) = (R)-lactaldehyde + NADH + H(+). The catalysed reaction is (S)-propane-1,2-diol + NAD(+) = (S)-lactaldehyde + NADH + H(+). The protein operates within carbohydrate degradation; L-fucose degradation. The polypeptide is Lactaldehyde reductase (fucO) (Escherichia coli O157:H7).